Consider the following 152-residue polypeptide: Small heat shock protein HspA (152 aa).

One can recognise a sHSP domain in the interval 29 to 139 (TAGEANYPPC…KPRRIPIDNL (111 aa)).

This sequence belongs to the small heat shock protein (HSP20) family.

The sequence is that of Small heat shock protein HspA (hspA) from Bradyrhizobium diazoefficiens (strain JCM 10833 / BCRC 13528 / IAM 13628 / NBRC 14792 / USDA 110).